The primary structure comprises 225 residues: Urease accessory protein UreG (225 aa).

Positions 1–21 are disordered; sequence MHLDHHHESAAAVSADARRPD. Residue 33-40 participates in GTP binding; the sequence is GPVGSGKT.

It belongs to the SIMIBI class G3E GTPase family. UreG subfamily. In terms of assembly, homodimer. UreD, UreF and UreG form a complex that acts as a GTP-hydrolysis-dependent molecular chaperone, activating the urease apoprotein by helping to assemble the nickel containing metallocenter of UreC. The UreE protein probably delivers the nickel.

Its subcellular location is the cytoplasm. Facilitates the functional incorporation of the urease nickel metallocenter. This process requires GTP hydrolysis, probably effectuated by UreG. This chain is Urease accessory protein UreG, found in Streptomyces coelicolor (strain ATCC BAA-471 / A3(2) / M145).